A 3938-amino-acid chain; its full sequence is Protein bassoon (3938 aa).

Residues 1–158 (MGNEASLEGG…PTSPYSVPQI (158 aa)) are disordered. Residue glycine 2 is the site of N-myristoyl glycine attachment. Gly residues predominate over residues 9–29 (GGAGEGPLPPGGSGLGPGPGA). Residues 31 to 61 (KPPSALAGGGQLPVAGAARAAGPPTPGLGLV) show a composition bias toward low complexity. Positions 62–70 (PGPGPGPGP) are 4 X 2 AA tandem repeats of P-G. Composition is skewed to polar residues over residues 86-98 (QRAT…QASA) and 127-154 (QVDS…SPYS). Serine 142 carries the phosphoserine modification. Arginine 145 bears the Omega-N-methylarginine mark. C4-type zinc fingers lie at residues 167-190 (CPIC…CTQC) and 195-217 (CNQC…CLNC). Disordered regions lie at residues 228–346 (TTAP…LTGK) and 361–456 (LMSV…KTMP). Polar residues predominate over residues 230–240 (APRSKSQQQLH). Serine 241 and serine 245 each carry phosphoserine. Over residues 361–376 (LMSVQPEADTQGQPSP) the composition is skewed to polar residues. The span at 394-406 (PRPPGSGPGPGPT) shows a compositional bias: pro residues. 2 consecutive C4-type zinc fingers follow at residues 462 to 485 (CPLC…CTAC) and 490 to 512 (CTLC…CLNC). Disordered regions lie at residues 523–921 (GEPA…LQGG), 934–1247 (GRLW…TPAG), 1294–1541 (MDPM…WQQS), and 1561–1611 (RMVH…RAPS). The span at 526–539 (APLPLPTPQEPPAG) shows a compositional bias: pro residues. Residues 548-589 (SPLKQKGPQGPGQPSGSLPPKASPQAAKASPQAAKASPQAKP) are compositionally biased toward low complexity. A run of 3 repeats spans residues 568-574 (KASPQAA), 575-581 (KASPQAA), and 582-588 (KASPQAK). The segment at 568–588 (KASPQAAKASPQAAKASPQAK) is 3 X 7 AA tandem repeats of K-A-S-P-Q-A-[AK]. The segment covering 616–629 (VPKPPPETAVPPGT) has biased composition (pro residues). Residues 668 to 677 (QDLSRSPQSL) show a composition bias toward polar residues. Positions 678–692 (SDTGYSSDGVSSSQS) are enriched in low complexity. The segment covering 693–702 (EITGVVQQEV) has biased composition (polar residues). 2 stretches are compositionally biased toward acidic residues: residues 769 to 784 (FDSD…EDDS) and 847 to 858 (SAEEDNLEEDDT). Position 863 is an omega-N-methylarginine (arginine 863). The residue at position 965 (serine 965) is a Phosphoserine. Positions 979-996 (PASTPSYTSGTSPTSLSS) are enriched in low complexity. A coiled-coil region spans residues 1032–1087 (IEDSSEEEELREEEELLREQEKMREVEQQRIRSTARKTRRDKEELRAQRRRERSKT). The segment covering 1034–1047 (DSSEEEELREEEEL) has biased composition (acidic residues). 2 positions are modified to phosphoserine: serine 1035 and serine 1036. Positions 1048–1061 (LREQEKMREVEQQR) are enriched in basic and acidic residues. Serine 1085 is modified (phosphoserine). Phosphothreonine is present on threonine 1087. Phosphoserine occurs at positions 1093 and 1099. A compositionally biased stretch (basic and acidic residues) spans 1102–1117 (EELRQAAEMEELHRSS). 2 stretches are compositionally biased toward low complexity: residues 1118–1128 (CSEYSPSPSLD) and 1158–1175 (SPTE…SGRP). A coiled-coil region spans residues 1176–1203 (LKSAEEAYEDMMRKAELLQRQQGQAAGA). Basic and acidic residues predominate over residues 1177 to 1192 (KSAEEAYEDMMRKAEL). Over residues 1194–1204 (QRQQGQAAGAR) the composition is skewed to low complexity. Residues 1211–1224 (SQPTGPRSQGSFEY) show a composition bias toward polar residues. Serine 1221 bears the Phosphoserine mark. Over residues 1318–1328 (SFPTSTSSDSS) the composition is skewed to low complexity. O-linked (GlcNAc) threonine glycosylation is present at threonine 1339. Residues 1342 to 1351 (FAKEPQEPLK) show a composition bias toward basic and acidic residues. Composition is skewed to low complexity over residues 1352-1364 (LHSS…LASK) and 1374-1386 (PGTP…APCP). Residue threonine 1380 is glycosylated (O-linked (GlcNAc) threonine). The span at 1402-1426 (SPSTSSTIHSYGQPPTTANYGSQTE) shows a compositional bias: polar residues. 3 positions are modified to phosphoserine: serine 1470, serine 1479, and serine 1481. A compositionally biased stretch (low complexity) spans 1476-1487 (STPSESPTFSPS). 2 stretches are compositionally biased toward polar residues: residues 1496–1510 (EFST…SSDI) and 1561–1597 (RMVH…SQMP). 2 positions are modified to omega-N-methylarginine: arginine 1780 and arginine 1784. Asymmetric dimethylarginine; alternate is present on arginine 1794. Arginine 1794 bears the Omega-N-methylarginine; alternate mark. Arginine 1806 bears the Omega-N-methylarginine mark. The disordered stretch occupies residues 1914–1964 (PSAPDKSVTDAALPGQSSGPFYSPRDPEPPEPLTFRAQGVVGPGPHEEQRP). A glycan (O-linked (GlcNAc) threonine) is linked at threonine 1922. Serine 1978 and serine 2034 each carry phosphoserine. Arginine 2039 and arginine 2069 each carry omega-N-methylarginine. An asymmetric dimethylarginine mark is found at arginine 2243, arginine 2253, and arginine 2259. The disordered stretch occupies residues 2280–2305 (AAKASGAGGPPRPELPAGGAREEPLS). Threonine 2307 carries O-linked (GlcNAc) threonine glycosylation. Disordered regions lie at residues 2318–2343 (VAQA…SGVL) and 2461–2486 (EEQK…PPAA). Residues 2345 to 2470 (RPVMEKEEAS…EEQKQRQKAP (126 aa)) adopt a coiled-coil conformation. O-linked (GlcNAc) threonine glycosylation occurs at threonine 2510. A disordered region spans residues 2513–2648 (PGQAREPVLH…HEASASSSAA (136 aa)). Polar residues predominate over residues 2527-2537 (SSASDMSLQTE). Serine 2564 bears the Phosphoserine mark. Residues threonine 2581 and threonine 2608 each carry the phosphothreonine modification. Over residues 2629–2641 (RHSDSGSDSKHEA) the composition is skewed to basic and acidic residues. O-linked (GlcNAc) threonine glycosylation is present at threonine 2685. The segment at 2715–3263 (EPDGQAQGVA…GGVSGRPGKD (549 aa)) is interaction with DAO. A phosphoserine mark is found at serine 2796, serine 2845, and serine 2851. Residues 2839 to 2859 (TLQRSLSDPKPLSPTAEESAK) form a disordered region. Threonine 2930 is a glycosylation site (O-linked (GlcNAc) threonine). The stretch at 2933–2975 (SLLRELDRDLRLVEHESTKLRKKQAELDEEEKEIDAKLKYLEL) forms a coiled coil. The interval 2934–2996 (LLRELDRDLR…DRVGRDYPPL (63 aa)) is sufficient for binding to ERC2. Serine 3007 carries the phosphoserine modification. Positions 3055–3068 (TQYTAGSSGPTQNG) are enriched in polar residues. Disordered stretches follow at residues 3055-3148 (TQYT…ADLE), 3162-3399 (AVTV…SRKF), 3414-3546 (QQRY…PRAH), and 3569-3910 (YHLG…VFSK). Positions 3184–3196 (EHGKAPEHPRGGD) are enriched in basic and acidic residues. Over residues 3198-3222 (SSVSQSPAPTYPSDSHYTSLEQNVP) the composition is skewed to polar residues. Position 3286 is a phosphoserine (serine 3286). The segment covering 3304 to 3315 (ESNGRPASTHYY) has biased composition (polar residues). 3 stretches are compositionally biased toward basic and acidic residues: residues 3316–3328 (SDSD…RADK), 3358–3377 (QGME…KDVE), and 3450–3469 (LSSH…RETA). The residue at position 3368 (serine 3368) is a Phosphoserine. Arginine 3488 carries the omega-N-methylarginine modification. Over residues 3506–3520 (PLGRPRPAGGALPPG) the composition is skewed to low complexity. Composition is skewed to basic and acidic residues over residues 3535 to 3546 (VQEHVKDGPRAH) and 3578 to 3588 (WFDKPRDARSD). Residues 3638–3651 (EHRHHGDHGRHSGR) show a composition bias toward basic residues. Basic and acidic residues predominate over residues 3652–3676 (HAGEEPGRRAARPHARDMGRHETRP). Residues 3751-3820 (PQQSQPPSSR…ARLQQQSQPT (70 aa)) are compositionally biased toward low complexity. A coiled-coil region spans residues 3772–3803 (QTQQQQQQQQQQQQQQQQQQQQQQQQGLGQQA). Omega-N-methylarginine is present on arginine 3822. The span at 3834 to 3848 (KPQPGPTTAPGPQPA) shows a compositional bias: pro residues. 2 stretches are compositionally biased toward low complexity: residues 3860–3887 (KPAA…KTGA) and 3894–3904 (GAPAGQPAAEG).

Interacts with PCLO, ERC2/CAST1, RIMS1 and UNC13A. Interacts with TPRG1L. Interacts with DYNLL1 and DYNLL2; these interactions potentially link PTVs to dynein and myosin V motor complexes. Interacts with ATG5; this interaction is important for the regulation of presynaptic autophagy. Interacts (via C-terminus) with TRIO (via N-terminus). Interacts with CTBP1. Interacts with SIAH1; this interaction negatively regulates SIAH1 E3 ligase activity. Interacts (via coiled region) with DAO; the interaction is direct. Post-translationally, myristoylated. The N-terminal myristoylation is not sufficient for presynaptic localization. Detected at synapses in the stratum lucidum in the hippocampus CA3 region (at protein level).

It localises to the cytoplasm. Its subcellular location is the presynaptic active zone. The protein localises to the cytoskeleton. The protein resides in the cytoplasmic vesicle. It is found in the secretory vesicle. It localises to the synaptic vesicle membrane. Scaffold protein of the presynaptic cytomatrix at the active zone (CAZ) which is the place in the synapse where neurotransmitter is released. After synthesis, participates in the formation of Golgi-derived membranous organelles termed Piccolo-Bassoon transport vesicles (PTVs) that are transported along axons to sites of nascent synaptic contacts. At the presynaptic active zone, regulates the spatial organization of synaptic vesicle cluster, the protein complexes that execute membrane fusion and compensatory endocytosis. Also functions in processes other than assembly such as the regulation of specific presynaptic protein ubiquitination by interacting with SIAH1 or the regulation of presynaptic autophagy by associating with ATG5. Also mediates synapse to nucleus communication leading to reconfiguration of gene expression by associating with the transcriptional corepressor CTBP1 and by subsequently reducing the size of its pool available for nuclear import. Inhibits the activity of the proportion of DAO enzyme that localizes to the presynaptic active zone, which may modulate synaptic transmission. This Rattus norvegicus (Rat) protein is Protein bassoon.